Consider the following 283-residue polypeptide: Demethylrebeccamycin-D-glucose O-methyltransferase (283 aa).

Residues Ser101, Gln106, 129–130, Leu146, and His151 each bind S-adenosyl-L-methionine; that span reads DA.

Belongs to the methyltransferase superfamily. Monomer.

The enzyme catalyses 4'-demethylrebeccamycin + S-adenosyl-L-methionine = rebeccamycin + S-adenosyl-L-homocysteine + H(+). Its function is as follows. Glycosyl O-methyltransferase that catalyzes the final step in the biosynthesis of rebeccamycin, an indolocarbazole alkaloid that inhibits topoisomerase 1. Has broad substrate specificity and functions as glycosyl O-methyltransferase on a number of rebeccamycin analogs. The polypeptide is Demethylrebeccamycin-D-glucose O-methyltransferase (rebM) (Lentzea aerocolonigenes (Lechevalieria aerocolonigenes)).